Consider the following 698-residue polypeptide: Probable Xaa-Pro aminopeptidase P (698 aa).

Residues D509, D520, E604, and E618 each contribute to the Mn(2+) site.

It belongs to the peptidase M24B family. Requires Mn(2+) as cofactor.

It carries out the reaction Release of any N-terminal amino acid, including proline, that is linked to proline, even from a dipeptide or tripeptide.. Catalyzes the removal of a penultimate prolyl residue from the N-termini of peptides. The chain is Probable Xaa-Pro aminopeptidase P (AMPP) from Trichophyton verrucosum (strain HKI 0517).